A 74-amino-acid chain; its full sequence is Mitotic-spindle organizing protein 1 (74 aa).

The protein belongs to the MOZART1 family. As to quaternary structure, part of the gamma-tubulin complex.

It is found in the cytoplasm. Its subcellular location is the cytoskeleton. It localises to the microtubule organizing center. The protein resides in the spindle pole body. Functionally, required for gamma-tubulin complex recruitment to the microtubule organizing center (MTOC). The polypeptide is Mitotic-spindle organizing protein 1 (Emericella nidulans (strain FGSC A4 / ATCC 38163 / CBS 112.46 / NRRL 194 / M139) (Aspergillus nidulans)).